Here is a 91-residue protein sequence, read N- to C-terminus: Molybdopterin synthase sulfur carrier subunit (91 aa).

1-thioglycine; alternate is present on G91. G91 bears the Glycyl adenylate; alternate mark.

It belongs to the MoaD family. MOCS2A subfamily. As to quaternary structure, heterotetramer; composed of 2 small (MOCS2A) and 2 large (MOCS2B) subunits. C-terminal thiocarboxylation occurs in 2 steps, it is first acyl-adenylated (-COAMP) via the hesA/moeB/thiF part of uba4, then thiocarboxylated (-COSH) via the rhodanese domain of uba4.

The protein resides in the cytoplasm. It participates in cofactor biosynthesis; molybdopterin biosynthesis. Functionally, acts as a sulfur carrier required for molybdopterin biosynthesis. Component of the molybdopterin synthase complex that catalyzes the conversion of precursor Z into molybdopterin by mediating the incorporation of 2 sulfur atoms into precursor Z to generate a dithiolene group. In the complex, serves as sulfur donor by being thiocarboxylated (-COSH) at its C-terminus by uba4. After interaction with MOCS2B, the sulfur is then transferred to precursor Z to form molybdopterin. The polypeptide is Molybdopterin synthase sulfur carrier subunit (Emericella nidulans (strain FGSC A4 / ATCC 38163 / CBS 112.46 / NRRL 194 / M139) (Aspergillus nidulans)).